Consider the following 111-residue polypeptide: PCNA-associated factor (111 aa).

S8 bears the Phosphoserine mark. K15 participates in a covalent cross-link: Glycyl lysine isopeptide (Lys-Gly) (interchain with G-Cter in ubiquitin). The D-box motif lies at 23–34 (RKVLGSSTSATN). Residues 23-111 (RKVLGSSTSA…QPDHTNDEKE (89 aa)) are disordered. The residue at position 24 (K24) is an N6-acetyllysine; alternate. K24 is covalently cross-linked (Glycyl lysine isopeptide (Lys-Gly) (interchain with G-Cter in ubiquitin); alternate). A phosphoserine mark is found at S28, S31, and S72. The span at 28–40 (SSTSATNSTSVSS) shows a compositional bias: low complexity. Residues 62-72 (QKGIGEFFRLS) carry the PIP-box motif. Residues 72-81 (SPKDSEKENQ) show a composition bias toward basic and acidic residues. The short motif at 78–80 (KEN) is the KEN box element. The Initiation motif motif lies at 85–97 (EAGSSGLGKAKRK).

In terms of assembly, interacts (when monoubiquitinated at Lys-15 and Lys-24) with PCNA. Interacts with isoform 2/p33ING1b of ING1. Interacts with BRCA1. Post-translationally, monoubiquitinated at Lys-15 and Lys-24 during normal S phase, promoting its association with PCNA. Also diubiquitinated at these 2 sites. Following DNA damage, monoubiquitin chains at Lys-15 and Lys-24 are probably extended, leading to disrupt the interaction with PCNA. Polyubiquitinated by the APC/C complex at the mitotic exit, leading to its degradation by the proteasome. As to expression, expressed predominantly in liver, pancreas and placenta. Not detected in heart or brain. Highly expressed in a number of tumors, especially esophageal tumors, in anaplastic thyroid carcinomas, adrenocortical carcinomas, and in non-small-cell lung cancer lines.

Its subcellular location is the nucleus. It localises to the cytoplasm. The protein resides in the perinuclear region. Its function is as follows. PCNA-binding protein that acts as a regulator of DNA repair during DNA replication. Following DNA damage, the interaction with PCNA is disrupted, facilitating the interaction between monoubiquitinated PCNA and the translesion DNA synthesis DNA polymerase eta (POLH) at stalled replisomes, facilitating the bypass of replication-fork-blocking lesions. Also acts as a regulator of centrosome number. In Homo sapiens (Human), this protein is PCNA-associated factor.